Here is a 506-residue protein sequence, read N- to C-terminus: Glucosidase 2 subunit beta (506 aa).

The first 23 residues, 1–23 (MKFSQWYTLTAPLLISSLYTVNA), serve as a signal peptide directing secretion. Cysteine 86 and cysteine 108 are disulfide-bonded. Coiled-coil stretches lie at residues 172–243 (SLVA…LYET) and 338–374 (ESYRRFEAAQRDLDAAEENEKSLEKEHTKLMHELEYH). Residues 279-474 (ESCNNHLSML…KMKSPAACSP (196 aa)) enclose the MRH domain. Cystine bridges form between cysteine 431–cysteine 460 and cysteine 445–cysteine 472. The ER retrieval sequence motif lies at 503–506 (VDEL).

As to quaternary structure, heterodimer of a catalytic subunit alpha (gls2) and a subunit beta (gtb1).

Its subcellular location is the endoplasmic reticulum. Subunit of glucosidase 2, which cleaves sequentially the 2 innermost alpha-1,3-linked glucose residues from the Glc(2)Man(9)GlcNAc(2) oligosaccharide precursor of immature glycoproteins in the endoplasmic reticulum (ER). Specifically required for the cleavage of the final glucose. The subunit beta retains the catalytic subunit alpha in the ER. This chain is Glucosidase 2 subunit beta (gtb1), found in Schizosaccharomyces pombe (strain 972 / ATCC 24843) (Fission yeast).